Reading from the N-terminus, the 518-residue chain is Serine/threonine-protein kinase UL13 (518 aa).

Disordered stretches follow at residues 1-22 (MDES…PQGA) and 39-120 (SRRA…PSPP). Low complexity predominate over residues 44-61 (GRPSGPSPRDGAVSGARP). Residues 151-518 (PGARSFGGSG…ANPAARHSLS (368 aa)) form the Protein kinase domain. ATP contacts are provided by residues 157-165 (GGSGGYGEV) and lysine 176. Aspartate 277 (proton acceptor) is an active-site residue.

The protein belongs to the protein kinase superfamily. Ser/Thr protein kinase family. Post-translationally, autophosphorylated.

It localises to the virion tegument. The protein localises to the host nucleus. The enzyme catalyses L-seryl-[protein] + ATP = O-phospho-L-seryl-[protein] + ADP + H(+). It carries out the reaction L-threonyl-[protein] + ATP = O-phospho-L-threonyl-[protein] + ADP + H(+). Functionally, multifunctional serine/threonine kinase that plays a role in several processes including egress of virus particles from the nucleus, modulation of the actin cytoskeleton and regulation of viral and cellular gene expression. Regulates the nuclear localization of viral envelopment factors UL34 and UL31, by phosphorylating the US3 kinase, indicating a role in nuclear egress. Disrupts host nuclear lamins, including LMNA and LMNB1. Phosphorylates the viral Fc receptor composed of glycoproteins E (gE) and I (gI). Phosphorylation of glycoprotein E (gE) by UL13 alters its subcellular localization, from the host early endosome to the plasma membrane. Participates in the transcriptional regulation of cellular and viral mRNAs mainly by phosphorylating the viral transcriptional regulator ICP22. Additional substrates have been identified, including UL41, UL49 or host EF1D. The chain is Serine/threonine-protein kinase UL13 from Homo sapiens (Human).